Here is a 158-residue protein sequence, read N- to C-terminus: Ribosome maturation factor RimP (158 aa).

It belongs to the RimP family.

The protein localises to the cytoplasm. In terms of biological role, required for maturation of 30S ribosomal subunits. This chain is Ribosome maturation factor RimP, found in Lactobacillus delbrueckii subsp. bulgaricus (strain ATCC 11842 / DSM 20081 / BCRC 10696 / JCM 1002 / NBRC 13953 / NCIMB 11778 / NCTC 12712 / WDCM 00102 / Lb 14).